A 94-amino-acid polypeptide reads, in one-letter code: NADH dehydrogenase [ubiquinone] iron-sulfur protein 3, mitochondrial (94 aa).

It belongs to the complex I 30 kDa subunit family. Core subunit of respiratory chain NADH dehydrogenase (Complex I) which is composed of 45 different subunits. Interacts with NDUFAF3. Interacts with RAB5IF. Found in subcomplexes containing subunits NDUFS2, MT-ND1 and NDUFA13.

The protein localises to the mitochondrion inner membrane. It carries out the reaction a ubiquinone + NADH + 5 H(+)(in) = a ubiquinol + NAD(+) + 4 H(+)(out). In terms of biological role, core subunit of the mitochondrial membrane respiratory chain NADH dehydrogenase (Complex I) which catalyzes electron transfer from NADH through the respiratory chain, using ubiquinone as an electron acceptor. Essential for the catalytic activity and assembly of complex I. In Mesocricetus auratus (Golden hamster), this protein is NADH dehydrogenase [ubiquinone] iron-sulfur protein 3, mitochondrial.